The following is a 179-amino-acid chain: tRNA-splicing endonuclease (179 aa).

Residues tyrosine 115, histidine 125, and lysine 156 contribute to the active site.

It belongs to the tRNA-intron endonuclease family. Archaeal short subfamily. In terms of assembly, homotetramer; although the tetramer contains four active sites, only two participate in the cleavage. Therefore, it should be considered as a dimer of dimers.

It catalyses the reaction pretRNA = a 3'-half-tRNA molecule with a 5'-OH end + a 5'-half-tRNA molecule with a 2',3'-cyclic phosphate end + an intron with a 2',3'-cyclic phosphate and a 5'-hydroxyl terminus.. Endonuclease that removes tRNA introns. Cleaves pre-tRNA at the 5'- and 3'-splice sites to release the intron. The products are an intron and two tRNA half-molecules bearing 2',3' cyclic phosphate and 5'-OH termini. Recognizes a pseudosymmetric substrate in which 2 bulged loops of 3 bases are separated by a stem of 4 bp. The chain is tRNA-splicing endonuclease (endA) from Methanocaldococcus jannaschii (strain ATCC 43067 / DSM 2661 / JAL-1 / JCM 10045 / NBRC 100440) (Methanococcus jannaschii).